A 719-amino-acid polypeptide reads, in one-letter code: DNA ligase (719 aa).

NAD(+) is bound by residues 42–46 (DAAYD), 92–93 (SL), and E126. The active-site N6-AMP-lysine intermediate is the K128. 4 residues coordinate NAD(+): R149, E185, K301, and K325. Residues C430, C433, C448, and C454 each contribute to the Zn(2+) site. The 80-residue stretch at 640–719 (ATGSPVEGKT…DDWFKLVGED (80 aa)) folds into the BRCT domain.

Belongs to the NAD-dependent DNA ligase family. LigA subfamily. It depends on Mg(2+) as a cofactor. Mn(2+) serves as cofactor.

It carries out the reaction NAD(+) + (deoxyribonucleotide)n-3'-hydroxyl + 5'-phospho-(deoxyribonucleotide)m = (deoxyribonucleotide)n+m + AMP + beta-nicotinamide D-nucleotide.. Functionally, DNA ligase that catalyzes the formation of phosphodiester linkages between 5'-phosphoryl and 3'-hydroxyl groups in double-stranded DNA using NAD as a coenzyme and as the energy source for the reaction. It is essential for DNA replication and repair of damaged DNA. The protein is DNA ligase of Brucella melitensis biotype 2 (strain ATCC 23457).